The following is a 597-amino-acid chain: Aspartate--tRNA ligase (597 aa).

Glutamate 171 provides a ligand contact to L-aspartate. Residues 195–198 form an aspartate region; that stretch reads QLFK. Arginine 217 contacts L-aspartate. ATP contacts are provided by residues 217-219 and glutamine 226; that span reads RDE. Histidine 448 is a binding site for L-aspartate. Glutamate 482 is an ATP binding site. Arginine 489 lines the L-aspartate pocket. Residue 534–537 participates in ATP binding; the sequence is GLDR.

This sequence belongs to the class-II aminoacyl-tRNA synthetase family. Type 1 subfamily. As to quaternary structure, homodimer.

It is found in the cytoplasm. The enzyme catalyses tRNA(Asp) + L-aspartate + ATP = L-aspartyl-tRNA(Asp) + AMP + diphosphate. Its function is as follows. Catalyzes the attachment of L-aspartate to tRNA(Asp) in a two-step reaction: L-aspartate is first activated by ATP to form Asp-AMP and then transferred to the acceptor end of tRNA(Asp). The polypeptide is Aspartate--tRNA ligase (Photobacterium profundum (strain SS9)).